The primary structure comprises 516 residues: Ribose import ATP-binding protein RbsA (516 aa).

ABC transporter domains lie at 14-250 (LRLT…VGRA) and 261-504 (AKGA…AGIG). Position 46–53 (46–53 (GENGAGKS)) interacts with ATP.

It belongs to the ABC transporter superfamily. Ribose importer (TC 3.A.1.2.1) family. The complex is composed of an ATP-binding protein (RbsA), two transmembrane proteins (RbsC) and a solute-binding protein (RbsB).

Its subcellular location is the cell inner membrane. It catalyses the reaction D-ribose(out) + ATP + H2O = D-ribose(in) + ADP + phosphate + H(+). Its function is as follows. Part of the ABC transporter complex RbsABC involved in ribose import. Responsible for energy coupling to the transport system. In Jannaschia sp. (strain CCS1), this protein is Ribose import ATP-binding protein RbsA.